Reading from the N-terminus, the 429-residue chain is Glutamate--tRNA ligase 1 (429 aa).

The 'HIGH' region signature appears at 6–16; that stretch reads PSPTGDMHIGN. Positions 235 to 239 match the 'KMSKS' region motif; that stretch reads KMSKR. Lys-238 lines the ATP pocket.

Belongs to the class-I aminoacyl-tRNA synthetase family. Glutamate--tRNA ligase type 1 subfamily. In terms of assembly, monomer.

The protein resides in the cytoplasm. The enzyme catalyses tRNA(Glu) + L-glutamate + ATP = L-glutamyl-tRNA(Glu) + AMP + diphosphate. In terms of biological role, catalyzes the attachment of glutamate to tRNA(Glu) in a two-step reaction: glutamate is first activated by ATP to form Glu-AMP and then transferred to the acceptor end of tRNA(Glu). In Campylobacter fetus subsp. fetus (strain 82-40), this protein is Glutamate--tRNA ligase 1.